The following is a 146-amino-acid chain: Cytidine deaminase (146 aa).

Residues 13–140 (EHVQRLLLSS…ELLPASFGPE (128 aa)) form the CMP/dCMP-type deaminase domain. 54–56 (NIE) is a binding site for substrate. Residue Cys65 participates in Zn(2+) binding. Glu67 acts as the Proton donor in catalysis. Residues Cys99 and Cys102 each coordinate Zn(2+).

Belongs to the cytidine and deoxycytidylate deaminase family. Homotetramer. Zn(2+) serves as cofactor.

The enzyme catalyses cytidine + H2O + H(+) = uridine + NH4(+). It carries out the reaction 2'-deoxycytidine + H2O + H(+) = 2'-deoxyuridine + NH4(+). Its function is as follows. This enzyme scavenges exogenous and endogenous cytidine and 2'-deoxycytidine for UMP synthesis. This is Cytidine deaminase (Cda) from Mus musculus (Mouse).